We begin with the raw amino-acid sequence, 232 residues long: Ribonuclease 3 (232 aa).

The RNase III domain occupies 6-133; it reads FNDIENRLGV…VIAAVYLDKG (128 aa). A Mg(2+)-binding site is contributed by E46. D50 is an active-site residue. Mg(2+) is bound by residues D119 and E122. Residue E122 is part of the active site. A DRBM domain is found at 160-229; the sequence is DFKTKLQELL…AKEALKRLEK (70 aa).

The protein belongs to the ribonuclease III family. As to quaternary structure, homodimer. Mg(2+) is required as a cofactor.

It localises to the cytoplasm. The enzyme catalyses Endonucleolytic cleavage to 5'-phosphomonoester.. Functionally, digests double-stranded RNA. Involved in the processing of primary rRNA transcript to yield the immediate precursors to the large and small rRNAs (23S and 16S). Processes some mRNAs, and tRNAs when they are encoded in the rRNA operon. Processes pre-crRNA and tracrRNA of type II CRISPR loci if present in the organism. The polypeptide is Ribonuclease 3 (Clostridium botulinum (strain Alaska E43 / Type E3)).